A 373-amino-acid polypeptide reads, in one-letter code: Nuclear migration protein JNM1 (373 aa).

Residues 33 to 53 (EVKEDGQQEEQEEASSRKDGL) form a disordered region. Ser-91 is modified (phosphoserine). Coiled coils occupy residues 114–139 (KIENLTSEMQTEIKELCEIQSKLATE), 200–245 (EDRK…EFEN), and 331–367 (WLKALNELDKKFDEQEVKIRENMEQIRRKIDTLEDEA).

In terms of assembly, component of the dynactin complex composed of at least ARP1, JNM1, NIP100 and ARP10. Dynactin comprises a short rod of ARP1 polymers attached to ARP10 at its pointed-end and probably associated with the capping protein at its barbed-end. The rod structure is implicated in dynein cargo binding. A sidearm formed by NIP100 projects from the ARP1 filament and is implicated in motor binding. Interacts with ARP1.

The protein resides in the cytoplasm. It localises to the cytoskeleton. Component of the dynactin complex which assists cytoplasmic dynein by increasing its processivity and by regulation of its cargo binding. The dynactin complex is required for the spindle translocation late in anaphase and is involved in a cell wall synthesis checkpoint. JNM1 is associated with the rod and links it to the projecting sidearm. Required for proper nuclear migration during the mitotic cell cycle and for astral microtubule development. In Saccharomyces cerevisiae (strain ATCC 204508 / S288c) (Baker's yeast), this protein is Nuclear migration protein JNM1 (JNM1).